The following is a 98-amino-acid chain: Large ribosomal subunit protein uL23 (98 aa).

The protein belongs to the universal ribosomal protein uL23 family. In terms of assembly, part of the 50S ribosomal subunit. Contacts protein L29, and trigger factor when it is bound to the ribosome.

Its function is as follows. One of the early assembly proteins it binds 23S rRNA. One of the proteins that surrounds the polypeptide exit tunnel on the outside of the ribosome. Forms the main docking site for trigger factor binding to the ribosome. This chain is Large ribosomal subunit protein uL23, found in Maricaulis maris (strain MCS10) (Caulobacter maris).